Consider the following 297-residue polypeptide: Phosphatidylinositol N-acetylglucosaminyltransferase subunit C (297 aa).

Transmembrane regions (helical) follow at residues Val-67–Gly-87, Thr-88–Gly-108, Ala-153–Val-173, and Ala-239–Ile-259.

Belongs to the PIGC family. In terms of assembly, component of the glycosylphosphatidylinositol-N-acetylglucosaminyltransferase (GPI-GnT) complex composed at least by PIGA, PIGC, PIGH, PIGP, PIGQ, PIGY and DPM2. Interacts with PIGQ. Interacts with the heterodimer PIGA:PIGH.

It localises to the endoplasmic reticulum membrane. It functions in the pathway glycolipid biosynthesis; glycosylphosphatidylinositol-anchor biosynthesis. Its function is as follows. Part of the glycosylphosphatidylinositol-N-acetylglucosaminyltransferase (GPI-GnT) complex that catalyzes the transfer of N-acetylglucosamine from UDP-N-acetylglucosamine to phosphatidylinositol and participates in the first step of GPI biosynthesis. The sequence is that of Phosphatidylinositol N-acetylglucosaminyltransferase subunit C from Bos taurus (Bovine).